The following is a 312-amino-acid chain: Ribonuclease Z (312 aa).

Residues H63, H65, D67, H68, H141, D212, and H270 each coordinate Zn(2+). The active-site Proton acceptor is D67.

This sequence belongs to the RNase Z family. In terms of assembly, homodimer. Zn(2+) is required as a cofactor.

The enzyme catalyses Endonucleolytic cleavage of RNA, removing extra 3' nucleotides from tRNA precursor, generating 3' termini of tRNAs. A 3'-hydroxy group is left at the tRNA terminus and a 5'-phosphoryl group is left at the trailer molecule.. Zinc phosphodiesterase, which displays some tRNA 3'-processing endonuclease activity. Probably involved in tRNA maturation, by removing a 3'-trailer from precursor tRNA. This is Ribonuclease Z from Lactobacillus acidophilus (strain ATCC 700396 / NCK56 / N2 / NCFM).